Here is a 269-residue protein sequence, read N- to C-terminus: Autophagy-related protein 5 (269 aa).

A Glycyl lysine isopeptide (Lys-Gly) (interchain with G-Cter in ATG12) cross-link involves residue K102.

Belongs to the ATG5 family. Conjugated with ATG12. The ATG5-ATG12 conjugate forms a complex with several units of ATG16. The ATG12-ATG5 conjugate also associates with ATG3. Conjugated to ATG12; which is essential for autophagy. Conjugation with ATG12 involves ATG7 as an E1-like activating enzyme and ATG10 as an E2-like conjugating enzyme.

It localises to the preautophagosomal structure membrane. Functionally, involved in cytoplasm to vacuole transport (Cvt) and autophagic vesicle formation. Autophagy is essential for maintenance of amino acid levels and protein synthesis under nitrogen starvation. Required for selective autophagic degradation of the nucleus (nucleophagy). Also required for mitophagy, which eliminates defective or superfluous mitochondria in order to fulfill cellular energy requirements and prevent excess ROS production. Conjugation with ATG12, through a ubiquitin-like conjugating system involving ATG7 as an E1-like activating enzyme and ATG10 as an E2-like conjugating enzyme, is essential for its function. The ATG12-ATG5 conjugate acts as an E3-like enzyme which is required for lipidation of ATG8 and ATG8 association to the vesicle membranes. ATG12-ATG5 rearranges the ATG3 catalytic center and enhances its E2 activity. Required for proper vegetative growth, asexual/sexual reproduction, but, unlike several plant and animal pathogenic fungi, where ATG5 is required for infection, in B.bassiana it is dispensable for pathogenesis. In Beauveria bassiana (strain ARSEF 2860) (White muscardine disease fungus), this protein is Autophagy-related protein 5.